The sequence spans 331 residues: Putative NAD(P)H nitroreductase acg (331 aa).

FMN contacts are provided by residues 28 to 32 (QPWRW) and arginine 316.

This sequence belongs to the nitroreductase family. The cofactor is FMN.

The sequence is that of Putative NAD(P)H nitroreductase acg (acg) from Mycobacterium tuberculosis (strain CDC 1551 / Oshkosh).